A 426-amino-acid chain; its full sequence is UPF0597 protein CLI_1810 (426 aa).

Belongs to the UPF0597 family.

The polypeptide is UPF0597 protein CLI_1810 (Clostridium botulinum (strain Langeland / NCTC 10281 / Type F)).